A 584-amino-acid chain; its full sequence is Putative poly(A) polymerase catalytic subunit (584 aa).

The segment covering 522–531 (EAEISEKEET) has biased composition (basic and acidic residues). The tract at residues 522-584 (EAEISEKEET…ENSLDSLTSD (63 aa)) is disordered. A compositionally biased stretch (low complexity) spans 546–569 (SPNSSPNSSPNNSLNNSIDISTNN).

Belongs to the poxviridae poly(A) polymerase catalytic subunit family. Highly divergent.

It is found in the virion. The catalysed reaction is RNA(n) + ATP = RNA(n)-3'-adenine ribonucleotide + diphosphate. Polymerase that creates the 3'-poly(A) tail of mRNA's. This is Putative poly(A) polymerase catalytic subunit from Acanthamoeba polyphaga (Amoeba).